Consider the following 253-residue polypeptide: Triosephosphate isomerase (253 aa).

Asparagine 8 to lysine 10 contacts substrate. Catalysis depends on histidine 93, which acts as the Electrophile. Glutamate 165 functions as the Proton acceptor in the catalytic mechanism. Substrate is bound by residues glycine 171, serine 210, and glycine 231–glycine 232.

Belongs to the triosephosphate isomerase family. As to quaternary structure, homodimer.

Its subcellular location is the cytoplasm. The catalysed reaction is D-glyceraldehyde 3-phosphate = dihydroxyacetone phosphate. Its pathway is carbohydrate biosynthesis; gluconeogenesis. The protein operates within carbohydrate degradation; glycolysis; D-glyceraldehyde 3-phosphate from glycerone phosphate: step 1/1. Functionally, involved in the gluconeogenesis. Catalyzes stereospecifically the conversion of dihydroxyacetone phosphate (DHAP) to D-glyceraldehyde-3-phosphate (G3P). This Francisella tularensis subsp. holarctica (strain FTNF002-00 / FTA) protein is Triosephosphate isomerase.